The primary structure comprises 429 residues: C4-dicarboxylate transport protein (429 aa).

The next 8 membrane-spanning stretches (helical) occupy residues 9 to 29, 45 to 65, 79 to 99, 149 to 169, 185 to 205, 223 to 243, 308 to 328, and 356 to 376; these read VLYVQVIFAIIVGVILGHYYP, LIKMVIGPIIFCTVVTGIAGM, LLYFEIVSTFALLLGLAATHI, GEILQILLIALLFGSVLAHLG, VLFGIVHIVTKLAPIGAFGAM, LIGTFYLTSVVFVLVVLGTIA, IYMTMAVLFIAQATNIELTWM, and AATLAVVPTIPLSGMVLILGI.

It belongs to the dicarboxylate/amino acid:cation symporter (DAACS) (TC 2.A.23) family.

The protein resides in the cell inner membrane. Responsible for the transport of dicarboxylates such as succinate, fumarate, and malate from the periplasm across the membrane. The chain is C4-dicarboxylate transport protein from Burkholderia lata (strain ATCC 17760 / DSM 23089 / LMG 22485 / NCIMB 9086 / R18194 / 383).